We begin with the raw amino-acid sequence, 616 residues long: TAF6-like RNA polymerase II p300/CBP-associated factor-associated factor 65 kDa subunit 6L (616 aa).

Disordered regions lie at residues 399–432 (SLLL…EDPS) and 455–539 (FGTG…GTRD). Phosphoserine occurs at positions 494 and 500. 3 positions are modified to asymmetric dimethylarginine: Arg-549, Arg-555, and Arg-587.

Belongs to the TAF6 family. As to quaternary structure, the PCAF complex is composed of a number of TBP-associated factors (TAFS), such as TAF5, TAF5L, TAF6, TAF6L, TAF9, TAF10 and TAF12, PCAF, and also PCAF-associated factors (PAFs), such as TADA2L/ADA2, TADA3L/ADA3 and SPT3. Component of the STAGA transcription coactivator-HAT complex, at least composed of SUPT3H, GCN5L2, TAF5L, TAF6L, SUPT7L, TADA3L, TAD1L, TAF10, TAF12, TRRAP and TAF9.

It is found in the nucleus. Functionally, functions as a component of the PCAF complex. The PCAF complex is capable of efficiently acetylating histones in a nucleosomal context. The PCAF complex could be considered as the human version of the yeast SAGA complex. With TAF5L, acts as an epigenetic regulator essential for somatic reprogramming. Regulates target genes through H3K9ac deposition and MYC recruitment which trigger MYC regulatory network to orchestrate gene expression programs to control embryonic stem cell state. Functions with MYC to activate target gene expression through RNA polymerase II pause release. This chain is TAF6-like RNA polymerase II p300/CBP-associated factor-associated factor 65 kDa subunit 6L, found in Mus musculus (Mouse).